The chain runs to 316 residues: MIFCLSSGQTPMAFRLPVVAEPEMPAGTDVSSTGRLPRWLKRPIPKSNSNHLTDSLMEEYGLETVCDNAKCPNRMECYSQQTATFMVLGNVCTRPCGFCAVSRGRPPAAPAVDEPDRIAKAAERLGLKHVVITSVTRDDLPDGGADHFHNCVIAVRERTGATTEVLTPDFVHCKEALARVIEAKPTVFNHNMETVPRLYRRVRGPKSDYAWTLEMMRQVKRYDAEVKTKSGLMLGLGEERGELLDALSDLREHDVDFLTLGQYLQPGEKYLPVVRYVPPEEFDELADIAKSMGFKKVASGPFVRSSYHARDMAETE.

[4Fe-4S] cluster contacts are provided by Cys-66, Cys-71, Cys-77, Cys-92, Cys-96, Cys-99, and Ser-306. In terms of domain architecture, Radical SAM core spans 78–295 (YSQQTATFMV…ADIAKSMGFK (218 aa)).

The protein belongs to the radical SAM superfamily. Lipoyl synthase family. The cofactor is [4Fe-4S] cluster.

Its subcellular location is the cytoplasm. The catalysed reaction is [[Fe-S] cluster scaffold protein carrying a second [4Fe-4S](2+) cluster] + N(6)-octanoyl-L-lysyl-[protein] + 2 oxidized [2Fe-2S]-[ferredoxin] + 2 S-adenosyl-L-methionine + 4 H(+) = [[Fe-S] cluster scaffold protein] + N(6)-[(R)-dihydrolipoyl]-L-lysyl-[protein] + 4 Fe(3+) + 2 hydrogen sulfide + 2 5'-deoxyadenosine + 2 L-methionine + 2 reduced [2Fe-2S]-[ferredoxin]. It functions in the pathway protein modification; protein lipoylation via endogenous pathway; protein N(6)-(lipoyl)lysine from octanoyl-[acyl-carrier-protein]: step 2/2. Functionally, catalyzes the radical-mediated insertion of two sulfur atoms into the C-6 and C-8 positions of the octanoyl moiety bound to the lipoyl domains of lipoate-dependent enzymes, thereby converting the octanoylated domains into lipoylated derivatives. In Rhodopirellula baltica (strain DSM 10527 / NCIMB 13988 / SH1), this protein is Lipoyl synthase.